Consider the following 949-residue polypeptide: TDRMTSTASAFVDRHVGPDTTELARILDAIGVDSLDELARKAVPESILDTVVDGVPDGLATLPPALSEHDALAALADLAGCNTVATSMIGLGYYDTLTPPVLTRGILENPAWYTAYTPYQPEISQGRLEALLNFQTMVSDLTGMDVANASMLDESTAAAESMTLMRRANRGSKSPRLVVDSDIFPQTKAVLATRAEPLGIELVYADLADGLPEGDFFGVLAQLPGASGRLVDHTATIEAAHERGALVAVGVDLLAATLVTAPGEIGADVCFGTTQRFGVPMGYGGPHAGYLAVRSGHSRQLPGRLVGVSVDADGHRAYRLALQTREQHIRREKATSNICTAQVLLAIVAAMYASYHGADGLRAIARRVNTRARTVAAGLQAAGIDVVHAEFFDTVLAAVPGAAHTVVDAAKQRGINLRPVDDDHVAIACDEATTEAHIVDVLAAFGAEPAGPGAESVPADCARTSEYLTHPAFTRYRTETAMLRYLRALSDKDIALDRSMIPLGSCTMKLNATAEMESITWPQFARQHPFAPSTDVPGLLRVIADLEQWLVDITGYDAVSLQPNAGSQGEYAGLLAIRRYHQANGDTGRTVCLIPSSAHGTNAASAVMVGMRVVVVACRPNGDVDVDDLRAKIAEHADTLAAIMITYPSTHGVYEHEISDICAAVHDAGGQVYVDGANLNALVGLARPGRFGGDVSHLNLHKTFCIPHGGGGPGVGPIGVRSHLQPYLPGHPLAPQLGDGPTVAGAPYGSASILTITWAYIAMMGAQGLRRATLTAIASANYIARRLDEYFPVLYTGDNGMVAHECILDLRGLTKDTGVTVDDVAKRLADYGFHAPTMSFPVPGTLMVEPTESENLEEIDAFCDAMISIRREIDRVGSGEWTVEDNPLRGAPHTAQCLVADWNHPYSRELAAYPAGYDRPKVWPAVRRIDGAHGDRNLVCSCPPIEAFA.

The residue at position 702 (Lys-702) is an N6-(pyridoxal phosphate)lysine.

It belongs to the GcvP family. The glycine cleavage system is composed of four proteins: P, T, L and H. Pyridoxal 5'-phosphate is required as a cofactor.

It carries out the reaction N(6)-[(R)-lipoyl]-L-lysyl-[glycine-cleavage complex H protein] + glycine + H(+) = N(6)-[(R)-S(8)-aminomethyldihydrolipoyl]-L-lysyl-[glycine-cleavage complex H protein] + CO2. The glycine cleavage system catalyzes the degradation of glycine. The P protein binds the alpha-amino group of glycine through its pyridoxal phosphate cofactor; CO(2) is released and the remaining methylamine moiety is then transferred to the lipoamide cofactor of the H protein. This Rhodococcoides fascians (Rhodococcus fascians) protein is Glycine dehydrogenase (decarboxylating).